The chain runs to 358 residues: MATH domain and coiled-coil domain-containing protein At3g58440 (358 aa).

Positions 8 to 131 constitute an MATH domain; it reads QDKFTWVLEK…NDRLTIVAEV (124 aa). Residues 250 to 309 adopt a coiled-coil conformation; it reads LRDAGFKVDWLEKKLDQLKEKKEEEMSGLARLHEIEERLQKLKLLFVDLESQLQKEKVEA.

The polypeptide is MATH domain and coiled-coil domain-containing protein At3g58440 (Arabidopsis thaliana (Mouse-ear cress)).